The sequence spans 550 residues: Hydroxylamine reductase (550 aa).

Positions 3, 6, 18, and 25 each coordinate [2Fe-2S] cluster. Hybrid [4Fe-2O-2S] cluster contacts are provided by His-249, Glu-273, Cys-317, Cys-405, Cys-433, Cys-458, Glu-492, and Lys-494. Residue Cys-405 is modified to Cysteine persulfide.

It belongs to the HCP family. It depends on [2Fe-2S] cluster as a cofactor. Hybrid [4Fe-2O-2S] cluster serves as cofactor.

Its subcellular location is the cytoplasm. It catalyses the reaction A + NH4(+) + H2O = hydroxylamine + AH2 + H(+). Functionally, catalyzes the reduction of hydroxylamine to form NH(3) and H(2)O. This is Hydroxylamine reductase from Proteus mirabilis (strain HI4320).